A 473-amino-acid chain; its full sequence is Probable glucose-6-phosphate 1-dehydrogenase C7.13c (473 aa).

NADP(+) contacts are provided by arginine 43, tyrosine 121, and lysine 144. D-glucose 6-phosphate is bound by residues lysine 144, histidine 174–lysine 178, glutamate 213, and aspartate 232. Histidine 237 functions as the Proton acceptor in the catalytic mechanism. D-glucose 6-phosphate is bound at residue lysine 331. NADP(+) is bound at residue lysine 341. Glutamine 366 contacts D-glucose 6-phosphate.

It belongs to the glucose-6-phosphate dehydrogenase family.

The protein resides in the cytoplasm. The enzyme catalyses D-glucose 6-phosphate + NADP(+) = 6-phospho-D-glucono-1,5-lactone + NADPH + H(+). The protein operates within carbohydrate degradation; pentose phosphate pathway; D-ribulose 5-phosphate from D-glucose 6-phosphate (oxidative stage): step 1/3. In terms of biological role, catalyzes the rate-limiting step of the oxidative pentose-phosphate pathway, which represents a route for the dissimilation of carbohydrates besides glycolysis. The main function of this enzyme is to provide reducing power (NADPH) and pentose phosphates for fatty acid and nucleic acid synthesis. The sequence is that of Probable glucose-6-phosphate 1-dehydrogenase C7.13c from Schizosaccharomyces pombe (strain 972 / ATCC 24843) (Fission yeast).